Consider the following 469-residue polypeptide: 3-isopropylmalate dehydratase large subunit (469 aa).

Residues Cys-350, Cys-410, and Cys-413 each contribute to the [4Fe-4S] cluster site.

Belongs to the aconitase/IPM isomerase family. LeuC type 1 subfamily. In terms of assembly, heterodimer of LeuC and LeuD. It depends on [4Fe-4S] cluster as a cofactor.

It catalyses the reaction (2R,3S)-3-isopropylmalate = (2S)-2-isopropylmalate. Its pathway is amino-acid biosynthesis; L-leucine biosynthesis; L-leucine from 3-methyl-2-oxobutanoate: step 2/4. Its function is as follows. Catalyzes the isomerization between 2-isopropylmalate and 3-isopropylmalate, via the formation of 2-isopropylmaleate. This is 3-isopropylmalate dehydratase large subunit from Brucella abortus (strain S19).